A 156-amino-acid polypeptide reads, in one-letter code: tRNA (cytidine(34)-2'-O)-methyltransferase (156 aa).

S-adenosyl-L-methionine contacts are provided by Gly102, Leu124, and Ser132.

It belongs to the class IV-like SAM-binding methyltransferase superfamily. RNA methyltransferase TrmH family. TrmL subfamily. Homodimer.

It localises to the cytoplasm. It carries out the reaction cytidine(34) in tRNA + S-adenosyl-L-methionine = 2'-O-methylcytidine(34) in tRNA + S-adenosyl-L-homocysteine + H(+). The enzyme catalyses 5-carboxymethylaminomethyluridine(34) in tRNA(Leu) + S-adenosyl-L-methionine = 5-carboxymethylaminomethyl-2'-O-methyluridine(34) in tRNA(Leu) + S-adenosyl-L-homocysteine + H(+). Functionally, methylates the ribose at the nucleotide 34 wobble position in the two leucyl isoacceptors tRNA(Leu)(CmAA) and tRNA(Leu)(cmnm5UmAA). Catalyzes the methyl transfer from S-adenosyl-L-methionine to the 2'-OH of the wobble nucleotide. In Burkholderia ambifaria (strain ATCC BAA-244 / DSM 16087 / CCUG 44356 / LMG 19182 / AMMD) (Burkholderia cepacia (strain AMMD)), this protein is tRNA (cytidine(34)-2'-O)-methyltransferase.